The primary structure comprises 479 residues: Cyclic AMP-responsive element-binding protein 3-like protein 3 (479 aa).

Residues 1-317 (MDGDIAAGKM…QSTSKPAHAG (317 aa)) are Cytoplasmic-facing. The segment at 67 to 144 (CILGPGDSDP…CPEPPRTQVQ (78 aa)) is disordered. Over residues 98–110 (PQDTPPRSGTEPA) the composition is skewed to polar residues. Residues 239 to 302 (VLKKIRRKIR…LSLLEQLKHL (64 aa)) form the bZIP domain. The tract at residues 241 to 270 (KKIRRKIRNKQSAQESRKKKKEYIDGLENR) is basic motif. The segment at 281-302 (LQRKVLHLEKQNLSLLEQLKHL) is leucine-zipper. A Glycyl lysine isopeptide (Lys-Gly) (interchain with G-Cter in ubiquitin) cross-link involves residue Lys290. A helical; Signal-anchor for type II membrane protein transmembrane segment spans residues 318 to 338 (TCIAVLLLSFALIILPSISPF). Residues 339–479 (NSNKVDSPGD…RLVQDALGVL (141 aa)) are Lumenal-facing. N-linked (GlcNAc...) asparagine glycosylation is found at Asn411, Asn418, and Asn425.

Belongs to the bZIP family. ATF subfamily. In terms of assembly, binds DNA as a dimer. May form homodimers. Interacts with ATF6. Interacts with SYNV1/HRD1; this interaction leads to CREB3L3 ubiquitination and proteasomal degradation. In terms of processing, following ER stress a fragment containing the cytoplasmic transcription factor domain is released by proteolysis. The cleavage seems to be performed sequentially by site-1 and site-2 proteases. Post-translationally, N-glycosylation is required for optimal proteolytic activation. Ubiquitinated at Lys-290 by SYNV1/HRD1 via 'Lys-27'-linked ubiquitin. Expressed in adult liver (at protein level) and small intestine.

The protein localises to the endoplasmic reticulum membrane. Its subcellular location is the nucleus. In terms of biological role, transcription factor that may act during endoplasmic reticulum (ER) stress by activating unfolded protein response target genes. Activated in response to cAMP stimulation. Binds to the cAMP response element (CRE). Activates transcription through box-B element. Activates transcription through CRE. May function synergistically with ATF6. In acute inflammatory response, may activate expression of acute phase response (APR) genes. May be involved in growth suppression. Regulates FGF21 transcription. Plays a crucial role in the regulation of triglyceride metabolism and is required for the maintenance of normal plasma triglyceride concentrations. The sequence is that of Cyclic AMP-responsive element-binding protein 3-like protein 3 (Creb3l3) from Mus musculus (Mouse).